The sequence spans 230 residues: Enolase-phosphatase E1 (230 aa).

This sequence belongs to the HAD-like hydrolase superfamily. MasA/MtnC family. Monomer. Mg(2+) serves as cofactor.

It catalyses the reaction 5-methylsulfanyl-2,3-dioxopentyl phosphate + H2O = 1,2-dihydroxy-5-(methylsulfanyl)pent-1-en-3-one + phosphate. It participates in amino-acid biosynthesis; L-methionine biosynthesis via salvage pathway; L-methionine from S-methyl-5-thio-alpha-D-ribose 1-phosphate: step 3/6. Its pathway is amino-acid biosynthesis; L-methionine biosynthesis via salvage pathway; L-methionine from S-methyl-5-thio-alpha-D-ribose 1-phosphate: step 4/6. Bifunctional enzyme that catalyzes the enolization of 2,3-diketo-5-methylthiopentyl-1-phosphate (DK-MTP-1-P) into the intermediate 2-hydroxy-3-keto-5-methylthiopentenyl-1-phosphate (HK-MTPenyl-1-P), which is then dephosphorylated to form the acireductone 1,2-dihydroxy-3-keto-5-methylthiopentene (DHK-MTPene). In Marinobacter nauticus (strain ATCC 700491 / DSM 11845 / VT8) (Marinobacter aquaeolei), this protein is Enolase-phosphatase E1.